We begin with the raw amino-acid sequence, 146 residues long: D-aminoacyl-tRNA deacylase (146 aa).

The Gly-cisPro motif, important for rejection of L-amino acids signature appears at 138–139; that stretch reads GP.

Belongs to the DTD family. Homodimer.

It is found in the cytoplasm. The catalysed reaction is glycyl-tRNA(Ala) + H2O = tRNA(Ala) + glycine + H(+). The enzyme catalyses a D-aminoacyl-tRNA + H2O = a tRNA + a D-alpha-amino acid + H(+). Its function is as follows. An aminoacyl-tRNA editing enzyme that deacylates mischarged D-aminoacyl-tRNAs. Also deacylates mischarged glycyl-tRNA(Ala), protecting cells against glycine mischarging by AlaRS. Acts via tRNA-based rather than protein-based catalysis; rejects L-amino acids rather than detecting D-amino acids in the active site. By recycling D-aminoacyl-tRNA to D-amino acids and free tRNA molecules, this enzyme counteracts the toxicity associated with the formation of D-aminoacyl-tRNA entities in vivo and helps enforce protein L-homochirality. This chain is D-aminoacyl-tRNA deacylase, found in Xanthomonas axonopodis pv. citri (strain 306).